The chain runs to 96 residues: Protein RnfH (96 aa).

This sequence belongs to the UPF0125 (RnfH) family.

The chain is Protein RnfH from Hahella chejuensis (strain KCTC 2396).